A 186-amino-acid polypeptide reads, in one-letter code: MLGKSQFDDLFEKMSRKVAGHTSRRGFIGRVGTAVAGVALVPLLPVDRRGRVSRANAAESAGDPRGKWKPQDNDVQSCDYWRHCSIDGNICDCSGGSLTSCPPGTKLASSSWVASCYNPTDKQSYLISYRDCCGANVSGRCACLNTEGELPVYRPEFGNDIIWCFGAEDDAMTYHCTISPIVGKAS.

The tat-type signal signal peptide spans 1–57; sequence MLGKSQFDDLFEKMSRKVAGHTSRRGFIGRVGTAVAGVALVPLLPVDRRGRVSRANA. Cystine bridges form between Cys-78/Cys-143, Cys-84/Cys-116, Cys-91/Cys-176, Cys-93/Cys-141, Cys-101/Cys-132, and Cys-133/Cys-164. Trp-112 carries the post-translational modification Tryptophylquinone. A cross-link (tryptophan tryptophylquinone (Trp-Trp)) is located at residues 112–163; it reads WVASCYNPTDKQSYLISYRDCCGANVSGRCACLNTEGELPVYRPEFGNDIIW.

This sequence belongs to the aromatic amine dehydrogenase light chain family. As to quaternary structure, heterotetramer of two light and two heavy chains. The cofactor is tryptophan tryptophylquinone residue. In terms of processing, predicted to be exported by the Tat system. The position of the signal peptide cleavage has been experimentally proven. Tryptophan tryptophylquinone (TTQ) is formed by oxidation of the indole ring of a tryptophan to form tryptophylquinone followed by covalent cross-linking with another tryptophan residue.

It is found in the periplasm. It catalyses the reaction 2 oxidized [amicyanin] + methylamine + H2O = 2 reduced [amicyanin] + formaldehyde + NH4(+) + 2 H(+). It functions in the pathway one-carbon metabolism; methylamine degradation; formaldehyde from methylamine: step 1/1. In terms of biological role, methylamine dehydrogenase carries out the oxidation of methylamine. Electrons are passed from methylamine dehydrogenase to amicyanin. The sequence is that of Methylamine dehydrogenase light chain (mauA) from Methylorubrum extorquens (strain ATCC 14718 / DSM 1338 / JCM 2805 / NCIMB 9133 / AM1) (Methylobacterium extorquens).